Here is a 526-residue protein sequence, read N- to C-terminus: Nuclear pore glycoprotein p62 (526 aa).

Residue serine 2 is modified to N-acetylserine. 4 tandem repeats follow at residues 6 to 7 (FG), 46 to 47 (FG), 78 to 79 (FG), and 115 to 116 (FG). Residues 6–144 (FGGTGAPAGG…GTAPTGFVFG (139 aa)) are 5 X 2 AA repeats of F-G. Positions 43 to 82 (GFNFGTPSQPAATTPSTSLFSLTTQTPTTQTPGFNFGTTP) are disordered. Residues 46–81 (FGTPSQPAATTPSTSLFSLTTQTPTTQTPGFNFGTT) are compositionally biased toward low complexity. Residues 128 to 137 (SGSTSNQGTA) show a composition bias toward polar residues. Residues 128–148 (SGSTSNQGTAPTGFVFGSSTT) form a disordered region. The stretch at 143–144 (FG) is repeat 5. Residues 332-462 (MTYAQLESLI…QDLKDIIEHL (131 aa)) form a required for centrosome localization region. Positions 332–462 (MTYAQLESLI…QDLKDIIEHL (131 aa)) form a coiled coil. Threonine 377 is a glycosylation site (O-linked (GlcNAc) threonine). Serine 412 and serine 422 each carry phosphoserine. The O-linked (GlcNAc) serine glycan is linked to serine 472.

Belongs to the nucleoporin NSP1/NUP62 family. Component of the p62 complex, a complex at least composed of NUP62, NUP54, and NUP58. Interacts with NUP88. Interacts with NUTF2. Interacts with HIKESHI. Interacts with OSBPL8. Interacts with CAPG. Interacts with SAS6 and TUBG1 at the centrosome. Interacts with MCM3AP. O-glycosylated. Post-translationally, the inner channel of the NPC has a different redox environment from the cytoplasm and allows the formation of interchain disulfide bonds between some nucleoporins, the significant increase of these linkages upon oxidative stress reduces the permeability of the NPC.

It is found in the nucleus. The protein localises to the nuclear pore complex. Its subcellular location is the cytoplasm. The protein resides in the cytoskeleton. It localises to the spindle pole. It is found in the nucleus envelope. The protein localises to the microtubule organizing center. Its subcellular location is the centrosome. Functionally, essential component of the nuclear pore complex. The N-terminal is probably involved in nucleocytoplasmic transport. The C-terminal is involved in protein-protein interaction probably via coiled-coil formation, promotes its association with centrosomes and may function in anchorage of p62 to the pore complex. Plays a role in mitotic cell cycle progression by regulating centrosome segregation, centriole maturation and spindle orientation. It might be involved in protein recruitment to the centrosome after nuclear breakdown. In Mus musculus (Mouse), this protein is Nuclear pore glycoprotein p62 (Nup62).